The following is a 373-amino-acid chain: ATP phosphoribosyltransferase regulatory subunit (373 aa).

Belongs to the class-II aminoacyl-tRNA synthetase family. HisZ subfamily. In terms of assembly, heteromultimer composed of HisG and HisZ subunits.

It localises to the cytoplasm. It participates in amino-acid biosynthesis; L-histidine biosynthesis; L-histidine from 5-phospho-alpha-D-ribose 1-diphosphate: step 1/9. Required for the first step of histidine biosynthesis. May allow the feedback regulation of ATP phosphoribosyltransferase activity by histidine. This is ATP phosphoribosyltransferase regulatory subunit from Chelativorans sp. (strain BNC1).